A 235-amino-acid polypeptide reads, in one-letter code: MSVHIGAKQGEIADKILLPGDPLRAKYIAETFLEEPKLYNEVRGMYGYTGTYKGERVSVQGTGMGVPSISIYVNELIQSYDVKKLIRVGTCGAIQKDVNVRDVILAQGATTDSQMNRLIFNGIDYAPIADFELLKNAYDAGVDKGLHLRVGNVFTSDTFYRDNAQQVNELLAKYQVLAIEMESTALYTLAAKYGRQALSVLTVSDHIITGEETTAEERQTTFNDMMEIALDTIIK.

An a purine D-ribonucleoside-binding site is contributed by His-4. Phosphate contacts are provided by residues Gly-20, Arg-24, Arg-43, and 87–90 (RVGT). Residues 180 to 182 (EME) and 204 to 205 (SD) each bind a purine D-ribonucleoside. Asp-205 acts as the Proton donor in catalysis.

This sequence belongs to the PNP/UDP phosphorylase family. As to quaternary structure, homohexamer; trimer of homodimers.

The catalysed reaction is a purine D-ribonucleoside + phosphate = a purine nucleobase + alpha-D-ribose 1-phosphate. It catalyses the reaction a purine 2'-deoxy-D-ribonucleoside + phosphate = a purine nucleobase + 2-deoxy-alpha-D-ribose 1-phosphate. Functionally, catalyzes the reversible phosphorolytic breakdown of the N-glycosidic bond in the beta-(deoxy)ribonucleoside molecules, with the formation of the corresponding free purine bases and pentose-1-phosphate. This is Purine nucleoside phosphorylase DeoD-type from Oceanobacillus iheyensis (strain DSM 14371 / CIP 107618 / JCM 11309 / KCTC 3954 / HTE831).